The primary structure comprises 443 residues: Protein king tubby (443 aa).

Disordered stretches follow at residues 57–85 and 98–189; these read TNGS…LSTI and HELE…ESEG. Over residues 68-85 the composition is skewed to polar residues; the sequence is AVNTSRNHSNNMRSLSTI. The span at 113–128 shows a compositional bias: low complexity; that stretch reads QHQQSASHSANSTQSQ. At serine 136 the chain carries Phosphoserine. Low complexity predominate over residues 148-160; it reads NRNVAAAAPVRPA. The span at 177–186 shows a compositional bias: gly residues; it reads NGTGNGTGGE.

This sequence belongs to the TUB family.

It is found in the cytoplasm. It localises to the nucleus. The protein localises to the cell projection. The protein resides in the cilium membrane. Its subcellular location is the rhabdomere. This chain is Protein king tubby, found in Drosophila yakuba (Fruit fly).